Here is a 385-residue protein sequence, read N- to C-terminus: V-type proton ATPase subunit C (385 aa).

Belongs to the V-ATPase C subunit family. As to quaternary structure, V-ATPase is a heteromultimeric enzyme made up of two complexes: the ATP-hydrolytic V1 complex and the proton translocation V0 complex. The V1 complex consists of three catalytic AB heterodimers that form a heterohexamer, three peripheral stalks each consisting of EG heterodimers, one central rotor including subunits D and F, and the regulatory subunits C and H. The proton translocation complex V0 consists of the proton transport subunit a, a ring of proteolipid subunits c9c'', rotary subunit d, subunits e and f, and the accessory subunits vah-19/Ac45 and vah-20/PRR. Interacts with V-type proton ATPase subunits a1 unc-32, a2 vha-5 and a3 vha-6.

The protein localises to the cytoplasm. The protein resides in the membrane. In terms of biological role, subunit of the V1 complex of vacuolar(H+)-ATPase (V-ATPase), a multisubunit enzyme composed of a peripheral complex (V1) that hydrolyzes ATP and a membrane integral complex (V0) that translocates protons. V-ATPase is responsible for acidifying and maintaining the pH of intracellular compartments and in some cell types, is targeted to the plasma membrane, where it is responsible for acidifying the extracellular environment. Subunit C is necessary for the assembly of the catalytic sector of the enzyme and is likely to have a specific function in its catalytic activity. Has roles in embryogenesis and ovulation. The sequence is that of V-type proton ATPase subunit C from Caenorhabditis briggsae.